A 180-amino-acid polypeptide reads, in one-letter code: O-acetyl-ADP-ribose deacetylase (180 aa).

The Macro domain occupies 1-175; sequence MKPQIEVVVG…LYQRLLIQRG (175 aa). Substrate-binding positions include 11–12, Asn-25, 33–35, and 122–126; these read DI, GVD, and STGVY. Asp-35 acts as the Proton acceptor in catalysis.

This sequence belongs to the MacroD-type family. YmdB subfamily. As to quaternary structure, homodimer. Interacts with RNase III.

The catalysed reaction is 3''-O-acetyl-ADP-D-ribose + H2O = ADP-D-ribose + acetate + H(+). The enzyme catalyses 2''-O-acetyl-ADP-D-ribose + H2O = ADP-D-ribose + acetate + H(+). Its function is as follows. Deacetylates O-acetyl-ADP ribose to yield ADP-ribose and free acetate. Down-regulates ribonuclease 3 (RNase III) activity. Acts by interacting directly with the region of the ribonuclease that is required for dimerization/activation. In Enterobacter sp. (strain 638), this protein is O-acetyl-ADP-ribose deacetylase.